Reading from the N-terminus, the 380-residue chain is Queuine tRNA-ribosyltransferase (380 aa).

The active-site Proton acceptor is aspartate 96. Residues 96–100 (DSGGF), aspartate 150, glutamine 193, and glycine 220 each bind substrate. An RNA binding region spans residues 251-257 (GVGAPDS). The active-site Nucleophile is aspartate 270. Residues 275–279 (TRIAR) are RNA binding; important for wobble base 34 recognition. Zn(2+) contacts are provided by cysteine 308, cysteine 310, cysteine 313, and histidine 339.

This sequence belongs to the queuine tRNA-ribosyltransferase family. In terms of assembly, homodimer. Within each dimer, one monomer is responsible for RNA recognition and catalysis, while the other monomer binds to the replacement base PreQ1. Zn(2+) serves as cofactor.

The catalysed reaction is 7-aminomethyl-7-carbaguanine + guanosine(34) in tRNA = 7-aminomethyl-7-carbaguanosine(34) in tRNA + guanine. The protein operates within tRNA modification; tRNA-queuosine biosynthesis. Functionally, catalyzes the base-exchange of a guanine (G) residue with the queuine precursor 7-aminomethyl-7-deazaguanine (PreQ1) at position 34 (anticodon wobble position) in tRNAs with GU(N) anticodons (tRNA-Asp, -Asn, -His and -Tyr). Catalysis occurs through a double-displacement mechanism. The nucleophile active site attacks the C1' of nucleotide 34 to detach the guanine base from the RNA, forming a covalent enzyme-RNA intermediate. The proton acceptor active site deprotonates the incoming PreQ1, allowing a nucleophilic attack on the C1' of the ribose to form the product. After dissociation, two additional enzymatic reactions on the tRNA convert PreQ1 to queuine (Q), resulting in the hypermodified nucleoside queuosine (7-(((4,5-cis-dihydroxy-2-cyclopenten-1-yl)amino)methyl)-7-deazaguanosine). The polypeptide is Queuine tRNA-ribosyltransferase (Streptococcus pneumoniae (strain ATCC BAA-255 / R6)).